Here is a 325-residue protein sequence, read N- to C-terminus: Small ribosomal subunit protein RACK1 (325 aa).

WD repeat units follow at residues 5-48 (QMKL…WDVD), 58-99 (IGRP…WDLN), 100-141 (QGVS…WNTL), 143-186 (QCKY…WNLG), 187-227 (NCRL…LWDL), 228-268 (NEGK…WDLE), and 269-320 (DKKE…YQVS).

It belongs to the WD repeat G protein beta family. Ribosomal protein RACK1 subfamily.

Functionally, required for the expression of antimicrobial peptide nlp-29 in response to fungal infection or physical injury. The protein is Small ribosomal subunit protein RACK1 (rack-1) of Caenorhabditis elegans.